The following is a 234-amino-acid chain: Probable pectate lyase F (234 aa).

The first 17 residues, 1–17 (MFSRIALLPAFLPVALA), serve as a signal peptide directing secretion. Residues N168 and N194 are each glycosylated (N-linked (GlcNAc...) asparagine).

This sequence belongs to the polysaccharide lyase 3 family. The cofactor is Ca(2+).

The protein localises to the secreted. It catalyses the reaction Eliminative cleavage of (1-&gt;4)-alpha-D-galacturonan to give oligosaccharides with 4-deoxy-alpha-D-galact-4-enuronosyl groups at their non-reducing ends.. Pectinolytic enzyme consist of four classes of enzymes: pectin lyase, polygalacturonase, pectin methylesterase and rhamnogalacturonase. Among pectinolytic enzymes, pectin lyase is the most important in depolymerization of pectin, since it cleaves internal glycosidic bonds of highly methylated pectins. Favors pectate, the anion, over pectin, the methyl ester. The chain is Probable pectate lyase F (plyF) from Aspergillus flavus (strain ATCC 200026 / FGSC A1120 / IAM 13836 / NRRL 3357 / JCM 12722 / SRRC 167).